Reading from the N-terminus, the 219-residue chain is Probable transaldolase (219 aa).

Lys83 serves as the catalytic Schiff-base intermediate with substrate.

The protein belongs to the transaldolase family. Type 3B subfamily.

The protein localises to the cytoplasm. It catalyses the reaction D-sedoheptulose 7-phosphate + D-glyceraldehyde 3-phosphate = D-erythrose 4-phosphate + beta-D-fructose 6-phosphate. It participates in carbohydrate degradation; pentose phosphate pathway; D-glyceraldehyde 3-phosphate and beta-D-fructose 6-phosphate from D-ribose 5-phosphate and D-xylulose 5-phosphate (non-oxidative stage): step 2/3. Transaldolase is important for the balance of metabolites in the pentose-phosphate pathway. The polypeptide is Probable transaldolase (Cereibacter sphaeroides (strain ATCC 17029 / ATH 2.4.9) (Rhodobacter sphaeroides)).